The sequence spans 75 residues: UPF0154 protein MMOB4450 (75 aa).

A helical membrane pass occupies residues 7-27 (IGLIVGLSILFTIVGLVVGFF).

The protein belongs to the UPF0154 family.

It is found in the cell membrane. This is UPF0154 protein MMOB4450 from Mycoplasma mobile (strain ATCC 43663 / 163K / NCTC 11711) (Mesomycoplasma mobile).